A 1024-amino-acid polypeptide reads, in one-letter code: Nardilysin-like (1024 aa).

Positions 41–103 (PDIYPEGSVP…DEVKGKGDHQ (63 aa)) are disordered. Positions 52-95 (QIDEDDEDGEEEDSDGSSEDDDDDEDDEEDGEGDEEDEDEDEDE) are enriched in acidic residues. H129 contributes to the Zn(2+) binding site. Residue E132 is the Proton acceptor of the active site. A Zn(2+)-binding site is contributed by H133. The active site involves E203. E210 is a Zn(2+) binding site.

It belongs to the peptidase M16 family. Requires Zn(2+) as cofactor.

The catalysed reaction is Hydrolysis of polypeptides, preferably at -Xaa-|-Arg-Lys-, and less commonly at -Arg-|-Arg-Xaa-, in which Xaa is not Arg or Lys.. In terms of biological role, cleaves peptide substrates on the N-terminus of arginine residues in dibasic pairs. This Arabidopsis thaliana (Mouse-ear cress) protein is Nardilysin-like.